The sequence spans 296 residues: Decaprenyl diphosphate synthase (296 aa).

The interval 1–58 (MVRNERTLKSTDFPQLPPAPDDYPTFPDKSTWPVVFPMLPPSPDGGPRRPPQHTSKAV) is disordered. Residue Asp-76 is part of the active site. Asp-76 contacts Mg(2+). Substrate is bound by residues 77-80 (GNGR), Trp-81, Arg-89, His-93, and 121-123 (STE). Asn-124 (proton acceptor) is an active-site residue. Substrate contacts are provided by residues Trp-125, Arg-127, Arg-244, and 250-252 (RSS). Residue Glu-263 coordinates Mg(2+).

The protein belongs to the UPP synthase family. In terms of assembly, homodimer. Mg(2+) is required as a cofactor.

The protein resides in the cell membrane. The enzyme catalyses (2Z,6E)-farnesyl diphosphate + 7 isopentenyl diphosphate = (2Z,6Z,10Z,14Z,18Z,22Z,26Z,30Z,34E)-decaprenyl diphosphate + 7 diphosphate. The catalysed reaction is n isopentenyl diphosphate + (2E,6E)-farnesyl diphosphate = a di-trans,poly-cis-polyprenyl diphosphate + n diphosphate. In terms of biological role, catalyzes the sequential condensation of isopentenyl diphosphate (IPP) in the cis configuration with (2Z,6E)-farnesyl diphosphate (Z-FPP or EZ-FPP) generating the 50 carbon product trans,polycis-decaprenyl diphosphate. When (2E,6E)-farnesyl diphosphate (E-FPP or EE-FPP) is used in vitro, both primary products decaprenyl diphosphate and (2E,6E,10E)-geranylgeranyl diphosphate (EEE-GGPP) are synthesized. M.tuberculosis does not synthesize (2E,6E,10Z)-geranylgeranyl diphosphate (EEZ-GGPP) and heptaprenyl diphosphate. Can also accept many different allylic substrates, including E-geranyl diphosphate (E-GPP), neryl diphosphate (NPP), and all-trans-geranyl-geranyl diphosphate. In Mycobacterium leprae (strain TN), this protein is Decaprenyl diphosphate synthase (uppS).